Reading from the N-terminus, the 72-residue chain is Translation initiation factor IF-1 (72 aa).

One can recognise an S1-like domain in the interval 1–72; sequence MAKEDVIEIE…TRGRITYRFK (72 aa).

The protein belongs to the IF-1 family. Component of the 30S ribosomal translation pre-initiation complex which assembles on the 30S ribosome in the order IF-2 and IF-3, IF-1 and N-formylmethionyl-tRNA(fMet); mRNA recruitment can occur at any time during PIC assembly.

It localises to the cytoplasm. In terms of biological role, one of the essential components for the initiation of protein synthesis. Stabilizes the binding of IF-2 and IF-3 on the 30S subunit to which N-formylmethionyl-tRNA(fMet) subsequently binds. Helps modulate mRNA selection, yielding the 30S pre-initiation complex (PIC). Upon addition of the 50S ribosomal subunit IF-1, IF-2 and IF-3 are released leaving the mature 70S translation initiation complex. This Streptococcus mutans serotype c (strain ATCC 700610 / UA159) protein is Translation initiation factor IF-1.